The following is a 222-amino-acid chain: Cytochrome b6 (222 aa).

Residues isoleucine 39 to phenylalanine 59 traverse the membrane as a helical segment. Cysteine 42 contributes to the heme c binding site. Residues histidine 93 and histidine 107 each coordinate heme b. Helical transmembrane passes span alanine 97–phenylalanine 117, leucine 123–tyrosine 143, and leucine 193–isoleucine 213. Positions 194 and 209 each coordinate heme b.

This sequence belongs to the cytochrome b family. PetB subfamily. As to quaternary structure, the 4 large subunits of the cytochrome b6-f complex are cytochrome b6, subunit IV (17 kDa polypeptide, PetD), cytochrome f and the Rieske protein, while the 4 small subunits are PetG, PetL, PetM and PetN. The complex functions as a dimer. Requires heme b as cofactor. Heme c is required as a cofactor.

It localises to the cellular thylakoid membrane. Component of the cytochrome b6-f complex, which mediates electron transfer between photosystem II (PSII) and photosystem I (PSI), cyclic electron flow around PSI, and state transitions. The chain is Cytochrome b6 from Crocosphaera subtropica (strain ATCC 51142 / BH68) (Cyanothece sp. (strain ATCC 51142)).